Consider the following 61-residue polypeptide: Conotoxin TeAr154 (61 aa).

Positions 1–19 (MHCLPVFVILLLLTASGLS) are cleaved as a signal peptide. A propeptide spanning residues 20 to 47 (VDARPKTEDDVPLSSFRDNTKSTLQRLL) is cleaved from the precursor. Residue E57 is modified to 4-carboxyglutamate.

In terms of processing, contains 2 disulfide bonds that can be either 'C1-C3, C2-C4' or 'C1-C4, C2-C3', since these disulfide connectivities have been observed for conotoxins with cysteine framework V (for examples, see AC P0DQQ7 and AC P81755). Contains 2 disulfide bonds. Expressed by the venom duct.

The protein localises to the secreted. This chain is Conotoxin TeAr154, found in Conus textile (Cloth-of-gold cone).